Here is a 199-residue protein sequence, read N- to C-terminus: Large ribosomal subunit protein bL25 (199 aa).

The protein belongs to the bacterial ribosomal protein bL25 family. CTC subfamily. In terms of assembly, part of the 50S ribosomal subunit; part of the 5S rRNA/L5/L18/L25 subcomplex. Contacts the 5S rRNA. Binds to the 5S rRNA independently of L5 and L18.

This is one of the proteins that binds to the 5S RNA in the ribosome where it forms part of the central protuberance. The sequence is that of Large ribosomal subunit protein bL25 from Pelobacter propionicus (strain DSM 2379 / NBRC 103807 / OttBd1).